Reading from the N-terminus, the 173-residue chain is Myosin light chain 5 (173 aa).

The tract at residues 1–20 is disordered; the sequence is MASRKTKKKEGGALRAQRAS. EF-hand domains lie at 30-65, 100-135, and 136-171; these read TQIQ…LGKT, DAEE…QADK, and MTAE…GEEK. The Ca(2+) site is built by Asp-43, Asn-45, Asp-47, and Asp-54.

Myosin is a hexamer of 2 heavy chains and 4 light chains. As to expression, expressed in fetal skeletal muscle and retina.

This is Myosin light chain 5 (MYL5) from Homo sapiens (Human).